A 295-amino-acid polypeptide reads, in one-letter code: Ankyrin repeat and SOCS box protein 17 (295 aa).

The stretch at 146–176 is one ANK repeat; that stretch reads SGITPLFYVAQTRQSNIFKILLQYGILEREK. Positions 232–295 constitute an SOCS box domain; that stretch reads LGRRPIISNW…RLQNYLNLEI (64 aa).

This sequence belongs to the ankyrin SOCS box (ASB) family.

It functions in the pathway protein modification; protein ubiquitination. In terms of biological role, may be a substrate-recognition component of a SCF-like ECS (Elongin-Cullin-SOCS-box protein) E3 ubiquitin-protein ligase complex which mediates the ubiquitination and subsequent proteasomal degradation of target proteins. In Macaca fascicularis (Crab-eating macaque), this protein is Ankyrin repeat and SOCS box protein 17 (ASB17).